Here is a 178-residue protein sequence, read N- to C-terminus: Large ribosomal subunit protein bL25 (178 aa).

The protein belongs to the bacterial ribosomal protein bL25 family. CTC subfamily. In terms of assembly, part of the 50S ribosomal subunit; part of the 5S rRNA/L5/L18/L25 subcomplex. Contacts the 5S rRNA. Binds to the 5S rRNA independently of L5 and L18.

This is one of the proteins that binds to the 5S RNA in the ribosome where it forms part of the central protuberance. This chain is Large ribosomal subunit protein bL25, found in Nitratiruptor sp. (strain SB155-2).